Reading from the N-terminus, the 409-residue chain is Transforming growth factor beta regulator 1 (409 aa).

The segment covering 1–13 (MNHSPATTFSPHS) has biased composition (polar residues). 2 disordered regions span residues 1 to 31 (MNHSPATTFSPHSRYQELKVRNKKSTKKSHK) and 127 to 162 (GGSCKKVKKDKREKGKENKSEAMKKPSKKKRVTEGT). Over residues 21–31 (RNKKSTKKSHK) the composition is skewed to basic residues. Residues 136 to 150 (DKREKGKENKSEAMK) show a composition bias toward basic and acidic residues. Residues 179-238 (VFPIVLEGLTVYSLGEIISDRAGFHEKVAIYPVGFCSTRVYVGMKNPDQKCLYTCQIKDG) enclose the FYR N-terminal domain. In terms of domain architecture, FYR C-terminal spans 239–318 (GTGPQFEIVP…RKCTGYQWVK (80 aa)).

Belongs to the TBRG1 family.

Its subcellular location is the nucleus. Its function is as follows. May act as a growth inhibitor. May be involved in maintaining chromosomal stability. The protein is Transforming growth factor beta regulator 1 (tbrg1) of Xenopus tropicalis (Western clawed frog).